We begin with the raw amino-acid sequence, 95 residues long: Small ribosomal subunit protein uS19 (95 aa).

The segment at 76-95 (PTRRFGGHADKKAKKGELKK) is disordered. Basic and acidic residues predominate over residues 82 to 95 (GHADKKAKKGELKK).

The protein belongs to the universal ribosomal protein uS19 family.

In terms of biological role, protein S19 forms a complex with S13 that binds strongly to the 16S ribosomal RNA. This Thermotoga maritima (strain ATCC 43589 / DSM 3109 / JCM 10099 / NBRC 100826 / MSB8) protein is Small ribosomal subunit protein uS19 (rpsS).